The chain runs to 294 residues: StAR-related lipid transfer protein 3 (294 aa).

One can recognise an MENTAL domain in the interval 1–66; that stretch reads DGYICNNGMD…YSPPESLAGS (66 aa). Positions 55–61 match the FFAT motif; the sequence is QFYSPPE. Positions 58–77 are disordered; sequence SPPESLAGSEEDLDEEGLGR. Residues 79-292 form the START domain; sequence AVSPQEKALV…LRQRIRDLRS (214 aa).

It belongs to the STARD3 family. Homodimer. In terms of processing, phosphorylated. Phosphorylation allows the tethering of two membranes that participates in the formation of ER-endosome contacts. Phosphorylation of FFAT motif drives membrane tethering between the endoplasmic reticulum and late endosomes that in turn allows the efficient transport of sterol mediated by the START domain.

Its subcellular location is the late endosome membrane. It catalyses the reaction cholesterol(in) = cholesterol(out). In terms of biological role, sterol-binding protein that mediates cholesterol transport from the endoplasmic reticulum to endosomes. The sterol transport mechanism is triggered by phosphorylation of FFAT motif that leads to membrane tethering between the endoplasmic reticulum and late endosomes. Acts as a lipid transfer protein that redirects sterol to the endosome at the expense of the cell membrane and favors membrane formation inside endosomes. The protein is StAR-related lipid transfer protein 3 of Salvelinus fontinalis (Brook trout).